Consider the following 562-residue polypeptide: TBC1 domain family member 24 (562 aa).

Residues lysine 36, arginine 40, lysine 238, arginine 242, and 293–297 (RLFSR) contribute to the a 1,2-diacyl-sn-glycero-3-phospho-(1D-myo-inositol) site. The Rab-GAP TBC domain occupies 42–259 (GHWAKSHSLR…FFHKVRGGQP (218 aa)). Residues 337–549 (EIVSVKEMRD…ISIIEVWGFK (213 aa)) form the TLDc domain. Residues 451–464 (ASSGDNDANSSQSA) are compositionally biased toward low complexity. The segment at 451–471 (ASSGDNDANSSQSAKDGIDPS) is disordered.

As to quaternary structure, interacts with ARF6.

It localises to the cell membrane. It is found in the cytoplasm. The protein localises to the cytoplasmic vesicle membrane. The protein resides in the presynapse. May act as a GTPase-activating protein for Rab family protein(s). Involved in neuronal projections development, probably through a negative modulation of ARF6 function. Involved in the regulation of synaptic vesicle trafficking. The sequence is that of TBC1 domain family member 24 (tbc1d24) from Xenopus tropicalis (Western clawed frog).